Consider the following 334-residue polypeptide: Protein CUP-SHAPED COTYLEDON 3 (334 aa).

An NAC domain is found at 22-171 (LPPGFRFHPT…EWVICRVFNK (150 aa)). Residues 121–177 (VGMKKTLVFYKGRAPRGLKTKWVMHEYRLENDHSHRHTCKEEWVICRVFNKTGDRKN) mediate DNA binding.

In terms of tissue distribution, in a general manner, present at the boundaries between mersitems and araising primordia.

It is found in the nucleus. Its function is as follows. Transcription activator. Involved in molecular mechanisms regulating shoot apical meristem (SAM) formation during embryogenesis and organ separation. Required for axillary meristem initiation and separation of the meristem from the main stem. May act as an inhibitor of cell division. The chain is Protein CUP-SHAPED COTYLEDON 3 (NAC031) from Arabidopsis thaliana (Mouse-ear cress).